The following is a 502-amino-acid chain: Glycerol kinase (502 aa).

Thr13 is a binding site for ADP. ATP-binding residues include Thr13, Thr14, and Ser15. Thr13 contacts sn-glycerol 3-phosphate. Arg17 is a binding site for ADP. Residues Arg83, Glu84, Tyr136, and Asp246 each contribute to the sn-glycerol 3-phosphate site. Positions 83, 84, 136, 246, and 247 each coordinate glycerol. 2 residues coordinate ADP: Thr268 and Gly311. ATP-binding residues include Thr268, Gly311, Gln315, and Gly412. ADP is bound by residues Gly412 and Asn416.

It belongs to the FGGY kinase family.

It carries out the reaction glycerol + ATP = sn-glycerol 3-phosphate + ADP + H(+). It functions in the pathway polyol metabolism; glycerol degradation via glycerol kinase pathway; sn-glycerol 3-phosphate from glycerol: step 1/1. Inhibited by fructose 1,6-bisphosphate (FBP). Its function is as follows. Key enzyme in the regulation of glycerol uptake and metabolism. Catalyzes the phosphorylation of glycerol to yield sn-glycerol 3-phosphate. This chain is Glycerol kinase, found in Francisella tularensis subsp. tularensis (strain WY96-3418).